A 376-amino-acid polypeptide reads, in one-letter code: UPF0754 membrane protein BLi01057/BL02871 (376 aa).

2 helical membrane passes run 1-21 (MYVF…GAVT) and 356-376 (YLGG…VILI).

Belongs to the UPF0754 family.

Its subcellular location is the cell membrane. The polypeptide is UPF0754 membrane protein BLi01057/BL02871 (Bacillus licheniformis (strain ATCC 14580 / DSM 13 / JCM 2505 / CCUG 7422 / NBRC 12200 / NCIMB 9375 / NCTC 10341 / NRRL NRS-1264 / Gibson 46)).